A 130-amino-acid chain; its full sequence is Small ribosomal subunit protein uS8 (130 aa).

Belongs to the universal ribosomal protein uS8 family. In terms of assembly, part of the 30S ribosomal subunit.

Its function is as follows. One of the primary rRNA binding proteins, it binds directly to 16S rRNA central domain where it helps coordinate assembly of the platform of the 30S subunit. This is Small ribosomal subunit protein uS8 from Methanosphaera stadtmanae (strain ATCC 43021 / DSM 3091 / JCM 11832 / MCB-3).